The primary structure comprises 156 residues: SCP2 sterol-binding domain-containing protein 1 (156 aa).

The SCP2 domain occupies 44–156 (TVPVFEDISQ…ERVFKDWAKW (113 aa)).

This is SCP2 sterol-binding domain-containing protein 1 (SCP2D1) from Bos taurus (Bovine).